The chain runs to 192 residues: Ion-translocating oxidoreductase complex subunit B (192 aa).

The tract at residues 1–26 is hydrophobic; it reads MSAVWIAVIAISLLGLIFGLILGYAS. Residues 32 to 91 enclose the 4Fe-4S domain; sequence QDDPVVEKIDELLPQSQCGQCGYPGCRPYAEAVGAQGEKINRCAPGGEAVMLKIAALLNV. [4Fe-4S] cluster contacts are provided by cysteine 49, cysteine 52, cysteine 57, cysteine 74, cysteine 117, cysteine 120, cysteine 123, cysteine 127, cysteine 147, cysteine 150, cysteine 153, and cysteine 157. 2 consecutive 4Fe-4S ferredoxin-type domains span residues 108 to 137 and 138 to 167; these read MLAVIDEPNCIGCTKCIQACPVDAIVGATR and AMHTVMNDLCTGCNLCVAPCPTQCISLVPV.

It belongs to the 4Fe4S bacterial-type ferredoxin family. RnfB subfamily. In terms of assembly, the complex is composed of six subunits: RnfA, RnfB, RnfC, RnfD, RnfE and RnfG. The cofactor is [4Fe-4S] cluster.

It is found in the cell inner membrane. Functionally, part of a membrane-bound complex that couples electron transfer with translocation of ions across the membrane. The protein is Ion-translocating oxidoreductase complex subunit B of Klebsiella pneumoniae (strain 342).